Consider the following 89-residue polypeptide: Cell division protein ZapA (89 aa).

It belongs to the ZapA family. Type 2 subfamily. In terms of assembly, homodimer. Interacts with FtsZ.

Its subcellular location is the cytoplasm. Activator of cell division through the inhibition of FtsZ GTPase activity, therefore promoting FtsZ assembly into bundles of protofilaments necessary for the formation of the division Z ring. It is recruited early at mid-cell but it is not essential for cell division. The polypeptide is Cell division protein ZapA (Bacillus thuringiensis (strain Al Hakam)).